The primary structure comprises 1153 residues: Error-prone DNA polymerase (1153 aa).

The interval 1107 to 1153 (DELIAPSASTEREAPLNDDRRDHPDLPAQQIRHPRNVRILPPSRDFH) is disordered. Residues 1116–1131 (TEREAPLNDDRRDHPD) are compositionally biased toward basic and acidic residues.

The protein belongs to the DNA polymerase type-C family. DnaE2 subfamily.

Its subcellular location is the cytoplasm. It carries out the reaction DNA(n) + a 2'-deoxyribonucleoside 5'-triphosphate = DNA(n+1) + diphosphate. In terms of biological role, DNA polymerase involved in damage-induced mutagenesis and translesion synthesis (TLS). It is not the major replicative DNA polymerase. The sequence is that of Error-prone DNA polymerase from Rhodopseudomonas palustris (strain BisA53).